The chain runs to 107 residues: MDKVNNNCCCGENAKPCCTDPNSGCCCVSETNNCCKSDKKECCTGTGEGCKCTGCKCCEPAKSGCCCGDKAKACCTDPNSGCCCSSKTNKCCDSTNKTECKTCECCK.

The propeptide occupies 1-2 (MD).

It belongs to the metallothionein superfamily. Type 7 family.

Its function is as follows. The metallothioneins are involved in the cellular sequestration of toxic metal ions. Binds 12 cadmium ions per molecule. This Tetrahymena pyriformis protein is Metallothionein-1.